A 614-amino-acid polypeptide reads, in one-letter code: Polyamine transporter 2 (614 aa).

The tract at residues 1-40 is disordered; sequence MSDQESVVSFNSQNTSMVDVEGQQPQQYVPSKTNSRANQL. Residues 1 to 173 lie on the Cytoplasmic side of the membrane; that stretch reads MSDQESVVSF…WPSWVRWSYT (173 aa). The residue at position 50 (serine 50) is a Phosphoserine. Residues 99–122 show a composition bias toward polar residues; that stretch reads RTASALSRTRTKQLNRTATNSSST. A disordered region spans residues 99-144; the sequence is RTASALSRTRTKQLNRTATNSSSTGKEEMEEEETEEREDQSGENEL. A compositionally biased stretch (acidic residues) spans 126 to 144; sequence EMEEEETEEREDQSGENEL. Residues 174-194 traverse the membrane as a helical segment; the sequence is VLLSILVICVAYGSACISGGL. Residues 195–206 lie on the Extracellular side of the membrane; that stretch reads GTVEKKYHVGME. The chain crosses the membrane as a helical span at residues 207–227; sequence AAILSCSLMVIGFSLGPLIWS. Residues 228-236 are Cytoplasmic-facing; sequence PVSDLYGRR. The chain crosses the membrane as a helical span at residues 237–257; it reads VAYFVSMGLYVIFNIPCALAP. Topologically, residues 258 to 266 are extracellular; the sequence is NLGCLLACR. The chain crosses the membrane as a helical span at residues 267-287; the sequence is FLCGVWSSSGLCLVGGSIADM. The Cytoplasmic segment spans residues 288 to 297; the sequence is FPSETRGKAI. A helical membrane pass occupies residues 298-318; the sequence is AFFAFAPYVGPVVGPLVNGFI. Topologically, residues 319-326 are extracellular; it reads SVSTGRMD. A helical transmembrane segment spans residues 327-347; sequence LIFWVNMAFAGVMWIISSAIP. Topologically, residues 348-407 are cytoplasmic; sequence ETYAPVILKRKAARLRKETGNPKIMTEQEAQGVSMSEMMRACLLRPLYFAVTEPVLVATC. Residues 408 to 428 traverse the membrane as a helical segment; the sequence is FYVCLIYSLLYAFFFAFPVIF. The Extracellular segment spans residues 429-437; it reads GELYGYKDN. Residues 438–458 traverse the membrane as a helical segment; the sequence is LVGLMFIPIVIGALWALATTF. The Cytoplasmic segment spans residues 459-478; sequence YCENKYLQIVKQRKPTPEDR. A helical membrane pass occupies residues 479–499; it reads LLGAKIGAPFAAIALWILGAT. The Extracellular portion of the chain corresponds to 500–503; that stretch reads AYKH. Residues 504-524 traverse the membrane as a helical segment; that stretch reads IIWVGPASAGLAFGFGMVLIY. Residues 525–541 lie on the Cytoplasmic side of the membrane; the sequence is YSLNNYIIDCYVQYASS. The chain crosses the membrane as a helical span at residues 542–562; it reads ALATKVFLRSAGGAAFPLFTI. Residues 563–574 are Extracellular-facing; that stretch reads QMYHKLNLHWGS. Residues 575-595 traverse the membrane as a helical segment; it reads WLLAFISTAMIALPFAFSYWG. Residues 596–614 lie on the Cytoplasmic side of the membrane; it reads KGLRHKLSKKDYSIDSVEM.

This sequence belongs to the major facilitator superfamily. DHA1 family. Polyamines/proton antiporter (TC 2.A.1.2.16) subfamily.

It is found in the cell membrane. Cell membrane polyamine/proton antiporter, involved in the detoxification of excess polyamines in the cytoplasm. Recognizes spermine, but not spermidine. In Saccharomyces cerevisiae (strain ATCC 204508 / S288c) (Baker's yeast), this protein is Polyamine transporter 2 (TPO2).